A 237-amino-acid chain; its full sequence is Ribonuclease PH (237 aa).

Phosphate is bound by residues arginine 86 and 124-126 (GTR).

Belongs to the RNase PH family. As to quaternary structure, homohexameric ring arranged as a trimer of dimers.

The catalysed reaction is tRNA(n+1) + phosphate = tRNA(n) + a ribonucleoside 5'-diphosphate. Phosphorolytic 3'-5' exoribonuclease that plays an important role in tRNA 3'-end maturation. Removes nucleotide residues following the 3'-CCA terminus of tRNAs; can also add nucleotides to the ends of RNA molecules by using nucleoside diphosphates as substrates, but this may not be physiologically important. Probably plays a role in initiation of 16S rRNA degradation (leading to ribosome degradation) during starvation. This chain is Ribonuclease PH, found in Xanthobacter autotrophicus (strain ATCC BAA-1158 / Py2).